A 251-amino-acid chain; its full sequence is Pyrroloquinoline-quinone synthase (251 aa).

It belongs to the PqqC family.

The catalysed reaction is 6-(2-amino-2-carboxyethyl)-7,8-dioxo-1,2,3,4,7,8-hexahydroquinoline-2,4-dicarboxylate + 3 O2 = pyrroloquinoline quinone + 2 H2O2 + 2 H2O + H(+). It functions in the pathway cofactor biosynthesis; pyrroloquinoline quinone biosynthesis. Its function is as follows. Ring cyclization and eight-electron oxidation of 3a-(2-amino-2-carboxyethyl)-4,5-dioxo-4,5,6,7,8,9-hexahydroquinoline-7,9-dicarboxylic-acid to PQQ. The polypeptide is Pyrroloquinoline-quinone synthase (Pseudomonas putida (strain ATCC 47054 / DSM 6125 / CFBP 8728 / NCIMB 11950 / KT2440)).